A 120-amino-acid polypeptide reads, in one-letter code: Dihydroneopterin aldolase (120 aa).

Substrate is bound by residues Glu20 and Met114.

The protein belongs to the archaeal dihydroneopterin aldolase family. As to quaternary structure, homotetramer.

The enzyme catalyses 7,8-dihydroneopterin = 6-hydroxymethyl-7,8-dihydropterin + glycolaldehyde. Its function is as follows. Catalyzes the conversion of 7,8-dihydroneopterin (H2Neo) to 6-hydroxymethyl-7,8-dihydropterin (6-HMD). The protein is Dihydroneopterin aldolase of Picrophilus torridus (strain ATCC 700027 / DSM 9790 / JCM 10055 / NBRC 100828 / KAW 2/3).